We begin with the raw amino-acid sequence, 156 residues long: Arginine repressor (156 aa).

Belongs to the ArgR family.

It localises to the cytoplasm. It participates in amino-acid biosynthesis; L-arginine biosynthesis [regulation]. Functionally, regulates arginine biosynthesis genes. The chain is Arginine repressor from Shewanella oneidensis (strain ATCC 700550 / JCM 31522 / CIP 106686 / LMG 19005 / NCIMB 14063 / MR-1).